Consider the following 562-residue polypeptide: Formate--tetrahydrofolate ligase (562 aa).

77-84 (TPAGEGKS) is an ATP binding site.

This sequence belongs to the formate--tetrahydrofolate ligase family.

The enzyme catalyses (6S)-5,6,7,8-tetrahydrofolate + formate + ATP = (6R)-10-formyltetrahydrofolate + ADP + phosphate. It participates in one-carbon metabolism; tetrahydrofolate interconversion. The protein is Formate--tetrahydrofolate ligase of Corynebacterium jeikeium (strain K411).